The following is a 653-amino-acid chain: Zinc finger CCCH domain-containing protein 54 (653 aa).

The segment at 242-261 (NGGGGGGGSPARARRSNGLS) is disordered. Residues 260 to 287 (LSTRRPCHYFSKGICKNGQNCHYSHHQV) form a C3H1-type zinc finger. In terms of domain architecture, HTH OST-type spans 313-396 (SLETLEMEIT…GQHSVVLAED (84 aa)). An RRM domain is found at 422–497 (HQIYLTFPAE…SRVLVKPYRE (76 aa)). Residues 537-565 (RLMRKQLAEKREMLLEMERRRATVRRLES) adopt a coiled-coil conformation. Residues 598–623 (PSLASPDPLEIVSNSQAPPTQAGNIY) are disordered. Polar residues predominate over residues 609–620 (VSNSQAPPTQAG).

This chain is Zinc finger CCCH domain-containing protein 54, found in Oryza sativa subsp. japonica (Rice).